A 185-amino-acid chain; its full sequence is Ribosome-recycling factor (185 aa).

It belongs to the RRF family.

The protein localises to the cytoplasm. Functionally, responsible for the release of ribosomes from messenger RNA at the termination of protein biosynthesis. May increase the efficiency of translation by recycling ribosomes from one round of translation to another. The chain is Ribosome-recycling factor from Nitrosomonas europaea (strain ATCC 19718 / CIP 103999 / KCTC 2705 / NBRC 14298).